The sequence spans 271 residues: Sec-independent protein translocase protein TatC (271 aa).

The next 5 membrane-spanning stretches (helical) occupy residues 24-44 (ISVG…EQIF), 78-98 (FFAG…LFIA), 112-132 (FLFV…YFVF), 159-179 (LVIK…GLLL), and 215-235 (FTQV…IFFG). The interval 247 to 271 (AAEEAQWAADHNVDDDDVDHPEHKA) is disordered.

Belongs to the TatC family. In terms of assembly, the Tat system comprises two distinct complexes: a TatABC complex, containing multiple copies of TatA, TatB and TatC subunits, and a separate TatA complex, containing only TatA subunits. Substrates initially bind to the TatABC complex, which probably triggers association of the separate TatA complex to form the active translocon.

It is found in the cell inner membrane. Functionally, part of the twin-arginine translocation (Tat) system that transports large folded proteins containing a characteristic twin-arginine motif in their signal peptide across membranes. Together with TatB, TatC is part of a receptor directly interacting with Tat signal peptides. The chain is Sec-independent protein translocase protein TatC from Magnetococcus marinus (strain ATCC BAA-1437 / JCM 17883 / MC-1).